The following is a 387-amino-acid chain: Phosphoglycerate kinase (387 aa).

Residues 21–23 (DLN), arginine 36, 59–62 (HLGR), arginine 113, and arginine 146 each bind substrate. Residues lysine 197, glutamate 314, and 340–343 (GGDT) each bind ATP.

It belongs to the phosphoglycerate kinase family. As to quaternary structure, monomer.

The protein resides in the cytoplasm. The enzyme catalyses (2R)-3-phosphoglycerate + ATP = (2R)-3-phospho-glyceroyl phosphate + ADP. It participates in carbohydrate degradation; glycolysis; pyruvate from D-glyceraldehyde 3-phosphate: step 2/5. The chain is Phosphoglycerate kinase from Pseudomonas savastanoi pv. phaseolicola (strain 1448A / Race 6) (Pseudomonas syringae pv. phaseolicola (strain 1448A / Race 6)).